The sequence spans 593 residues: Aspartate--tRNA(Asp/Asn) ligase (593 aa).

Glu-172 serves as a coordination point for L-aspartate. The tract at residues 196–199 (QLFK) is aspartate. Arg-218 lines the L-aspartate pocket. ATP contacts are provided by residues 218-220 (RDE) and Gln-227. His-450 is an L-aspartate binding site. Glu-484 provides a ligand contact to ATP. Position 491 (Arg-491) interacts with L-aspartate. ATP is bound at residue 536–539 (GLDR).

This sequence belongs to the class-II aminoacyl-tRNA synthetase family. Type 1 subfamily. As to quaternary structure, homodimer.

It localises to the cytoplasm. It catalyses the reaction tRNA(Asx) + L-aspartate + ATP = L-aspartyl-tRNA(Asx) + AMP + diphosphate. In terms of biological role, aspartyl-tRNA synthetase with relaxed tRNA specificity since it is able to aspartylate not only its cognate tRNA(Asp) but also tRNA(Asn). Reaction proceeds in two steps: L-aspartate is first activated by ATP to form Asp-AMP and then transferred to the acceptor end of tRNA(Asp/Asn). The protein is Aspartate--tRNA(Asp/Asn) ligase of Nitrosomonas europaea (strain ATCC 19718 / CIP 103999 / KCTC 2705 / NBRC 14298).